The chain runs to 370 residues: Anhydro-N-acetylmuramic acid kinase (370 aa).

13 to 20 lines the ATP pocket; that stretch reads GTSMDGVD.

Belongs to the anhydro-N-acetylmuramic acid kinase family.

It carries out the reaction 1,6-anhydro-N-acetyl-beta-muramate + ATP + H2O = N-acetyl-D-muramate 6-phosphate + ADP + H(+). It participates in amino-sugar metabolism; 1,6-anhydro-N-acetylmuramate degradation. Its pathway is cell wall biogenesis; peptidoglycan recycling. Catalyzes the specific phosphorylation of 1,6-anhydro-N-acetylmuramic acid (anhMurNAc) with the simultaneous cleavage of the 1,6-anhydro ring, generating MurNAc-6-P. Is required for the utilization of anhMurNAc either imported from the medium or derived from its own cell wall murein, and thus plays a role in cell wall recycling. The chain is Anhydro-N-acetylmuramic acid kinase from Vibrio vulnificus (strain CMCP6).